The sequence spans 128 residues: Fluoride-specific ion channel FluC (128 aa).

Helical transmembrane passes span 7 to 29, 36 to 57, 65 to 94, and 98 to 126; these read LNFI…LGLR, PWGT…VALI, AWIR…DMLE, and YATA…VRLL. Asparagine 43 is a binding site for fluoride. The Na(+) site is built by glycine 77 and threonine 80. Fluoride is bound by residues tyrosine 104, serine 108, and serine 112.

Belongs to the fluoride channel Fluc/FEX (TC 1.A.43) family. In terms of assembly, homodimer.

Its subcellular location is the cell inner membrane. The catalysed reaction is fluoride(in) = fluoride(out). With respect to regulation, na(+) is not transported, but it plays an essential structural role and its presence is essential for fluoride channel function. The Na(+)-binding site is specific for Na(+) over most other cations including K(+) and Mg(2+). Fluoride efflux is inhibited by Li(2+). Its function is as follows. Fluoride-specific ion channel. Important for reducing fluoride concentration in the cell, thus reducing its toxicity. Is highly specific for fluoride ions and cannot transport chloride ions. This chain is Fluoride-specific ion channel FluC, found in Bordetella pertussis (strain Tohama I / ATCC BAA-589 / NCTC 13251).